The sequence spans 453 residues: Zinc finger CCCH domain-containing protein 26 (453 aa).

Over residues 1-15 (MSETQQQVQNSTGSI) the composition is skewed to polar residues. Residues 1–47 (MSETQQQVQNSTGSIRSPDKIEDTFRRMKVNEDNMEQSSPYPDRPGE) are disordered. Ser2 is subject to N-acetylserine. Positions 17-32 (SPDKIEDTFRRMKVNE) are enriched in basic and acidic residues. 5 C3H1-type zinc fingers span residues 44–72 (RPGE…HPLT), 95–112 (ETGA…HPKD), 129–157 (RQGE…HPHP), 261–289 (FSER…HPKE), and 307–335 (RPGQ…HSML). Residues 360 to 379 (STNLRISSPPSPSDMTTLSN) are compositionally biased toward polar residues. The tract at residues 360-453 (STNLRISSPP…KVQDSSDKST (94 aa)) is disordered. Residues 391-407 (ETEKQDDSPTEPEKSEV) are compositionally biased toward basic and acidic residues. A compositionally biased stretch (polar residues) spans 413–422 (PNGSDSTSLP). Residues 441–453 (DSSKVQDSSDKST) are compositionally biased toward basic and acidic residues.

It is found in the nucleus. The chain is Zinc finger CCCH domain-containing protein 26 (ZFN2) from Arabidopsis thaliana (Mouse-ear cress).